The following is a 535-amino-acid chain: T-complex protein 1 subunit zeta 1 (535 aa).

It belongs to the TCP-1 chaperonin family. Heterooligomeric complex of about 850 to 900 kDa that forms two stacked rings, 12 to 16 nm in diameter.

Its subcellular location is the cytoplasm. Functionally, molecular chaperone; assists the folding of proteins upon ATP hydrolysis. Known to play a role, in vitro, in the folding of actin and tubulin. In Arabidopsis thaliana (Mouse-ear cress), this protein is T-complex protein 1 subunit zeta 1.